Here is a 148-residue protein sequence, read N- to C-terminus: MEQTFIMIKPDGVQRGLVGEIIGRFEKKGFSLKGLKLITVDRAFAEKHYSDLSAKPFFNGLVDYIISGPVVAMVWEGKGVVTTGRKIIGATNPLESAPGTIRGDYAIDIGRNVIHGSDAVESARKEIALWFPEGVAEWQSSLHSWIYE.

ATP is bound by residues K9, F57, R85, T91, R102, and N112. H115 (pros-phosphohistidine intermediate) is an active-site residue.

Belongs to the NDK family. Requires Mg(2+) as cofactor.

It catalyses the reaction a 2'-deoxyribonucleoside 5'-diphosphate + ATP = a 2'-deoxyribonucleoside 5'-triphosphate + ADP. The catalysed reaction is a ribonucleoside 5'-diphosphate + ATP = a ribonucleoside 5'-triphosphate + ADP. In terms of biological role, major role in the synthesis of nucleoside triphosphates other than ATP. The ATP gamma phosphate is transferred to the NDP beta phosphate via a ping-pong mechanism, using a phosphorylated active-site intermediate. This Nicotiana tabacum (Common tobacco) protein is Nucleoside diphosphate kinase 1.